The following is a 111-amino-acid chain: Large ribosomal subunit protein uL22 (111 aa).

Belongs to the universal ribosomal protein uL22 family. Part of the 50S ribosomal subunit.

Functionally, this protein binds specifically to 23S rRNA; its binding is stimulated by other ribosomal proteins, e.g. L4, L17, and L20. It is important during the early stages of 50S assembly. It makes multiple contacts with different domains of the 23S rRNA in the assembled 50S subunit and ribosome. In terms of biological role, the globular domain of the protein is located near the polypeptide exit tunnel on the outside of the subunit, while an extended beta-hairpin is found that lines the wall of the exit tunnel in the center of the 70S ribosome. This chain is Large ribosomal subunit protein uL22, found in Geobacter sulfurreducens (strain ATCC 51573 / DSM 12127 / PCA).